Reading from the N-terminus, the 64-residue chain is DNA-binding protein 7a (64 aa).

N6-methyllysine; partial is present on residues Lys5 and Lys7.

It belongs to the 7 kDa DNA-binding/endoribonuclease P2 family. As to quaternary structure, homodimer. In terms of processing, lys-5 and Lys-7 were found to be 60% monomethylated. Post-translationally, ADP-ribosylated by endogenous proteins in vitro.

In terms of biological role, can constrain negative DNA supercoils. May be involved in maintaining the integrity of the genome at high temperature. Has RNA endonuclease activity with a narrow substrate specificity; the cleavage products are 3'-phosphooligonucleotides. This is DNA-binding protein 7a (sso7a1) from Saccharolobus solfataricus (strain ATCC 35092 / DSM 1617 / JCM 11322 / P2) (Sulfolobus solfataricus).